Consider the following 351-residue polypeptide: Gene 58 protein (351 aa).

11 helical membrane-spanning segments follow: residues 14–34 (FSTG…ATVF), 43–63 (QSVL…FCAV), 70–90 (LGLL…SWSL), 97–117 (LVPG…IVCF), 133–153 (LGFL…IYLT), 155–175 (VMFA…SHVW), 214–234 (LICL…LVMF), 240–260 (GVST…SLII), 268–288 (AVYS…GYLF), 293–313 (LSML…CLLY), and 328–348 (FILN…LLAQ).

This sequence belongs to the herpesviridae BMRF2 family.

The protein localises to the host membrane. The chain is Gene 58 protein (58) from Connochaetes taurinus (Blue wildebeest).